The primary structure comprises 487 residues: Chromosomal replication initiator protein DnaA (487 aa).

The interval 1-79 (MPNSMWHQCL…QAPRVMMKVG (79 aa)) is domain I, interacts with DnaA modulators. The disordered stretch occupies residues 78–138 (VGSAPKPTDP…PAPKAQAERR (61 aa)). The segment at 79 to 150 (GSAPKPTDPV…QVEGDIKHQS (72 aa)) is domain II. The interval 151-367 (FLNETFTFDT…GALRLVIANA (217 aa)) is domain III, AAA+ region. ATP-binding residues include Gly-195, Gly-197, Lys-198, and Thr-199. Residues 368-487 (HFTGSEITPP…YQNFMRLLTT (120 aa)) form a domain IV, binds dsDNA region.

It belongs to the DnaA family. In terms of assembly, oligomerizes as a right-handed, spiral filament on DNA at oriC.

The protein localises to the cytoplasm. Its function is as follows. Plays an essential role in the initiation and regulation of chromosomal replication. ATP-DnaA binds to the origin of replication (oriC) to initiate formation of the DNA replication initiation complex once per cell cycle. Binds the DnaA box (a 9 base pair repeat at the origin) and separates the double-stranded (ds)DNA. Forms a right-handed helical filament on oriC DNA; dsDNA binds to the exterior of the filament while single-stranded (ss)DNA is stabiized in the filament's interior. The ATP-DnaA-oriC complex binds and stabilizes one strand of the AT-rich DNA unwinding element (DUE), permitting loading of DNA polymerase. After initiation quickly degrades to an ADP-DnaA complex that is not apt for DNA replication. Binds acidic phospholipids. The polypeptide is Chromosomal replication initiator protein DnaA (Marinobacter nauticus (strain ATCC 700491 / DSM 11845 / VT8) (Marinobacter aquaeolei)).